A 689-amino-acid polypeptide reads, in one-letter code: Putative pentatricopeptide repeat-containing protein At3g15130 (689 aa).

PPR repeat units follow at residues 5–39 (QRQN…GSGL), 40–70 (NLIT…MPER), 71–105 (NVVS…GIYP), 106–140 (NEFT…GFEM), 141–171 (MVEV…IVDR), 172–206 (SLIS…NIKE), 209–243 (DEFT…GFHC), 246–276 (SATI…IKEK), 277–311 (TMIS…NSQI), 312–342 (DSFA…AVKL), 347–377 (ETSV…MQLK), 378–412 (DVIS…NIEP), 413–448 (DEVC…GIKP), and 449–479 (RVEH…MPIK). Residues 484-559 (IWQTLLSLCR…EAGMSWVEIE (76 aa)) form a type E motif region. The segment at 560 to 590 (REVHFFRSGEDSHPLTPVIQETLKEAERRLR) is type E(+) motif. The interval 592–689 (ELGYVYGLKH…DGCCSCGDYW (98 aa)) is type DYW motif.

The protein belongs to the PPR family. PCMP-H subfamily.

The chain is Putative pentatricopeptide repeat-containing protein At3g15130 (PCMP-H86) from Arabidopsis thaliana (Mouse-ear cress).